The chain runs to 1919 residues: Transcription initiation factor TFIID subunit 1 (1919 aa).

Disordered stretches follow at residues 1–25 and 143–169; these read MAES…EDNS and DDED…TEKR. Residues 143–158 show a composition bias toward acidic residues; that stretch reads DDEDYDEEEEQEEEQA. A Ubiquitin-like domain is found at 661 to 737; sequence MKIIVKSLGG…VHLIRTKVHL (77 aa). 3 disordered regions span residues 1287–1314, 1408–1679, and 1726–1746; these read DQKK…NIAL, MRTN…RPKE, and RSER…KKKL. 3 stretches are compositionally biased toward basic and acidic residues: residues 1465 to 1476, 1535 to 1547, and 1555 to 1565; these read SVDEALKGDKLS, KPKE…ERRS, and SRERGESESHK. Residues 1566–1587 show a composition bias toward polar residues; that stretch reads PSVSGQPLSSTERNQAASSRHT. Over residues 1628–1655 the composition is skewed to basic and acidic residues; sequence RSKEMNDHDMSSLEESPRFESRKTKRMA. Residues 1661–1671 show a composition bias toward polar residues; sequence QRQQSFRLSEN. Positions 1713–1750 form a coiled coil; the sequence is NEIAEIRRYEEVIRSEREEEERQKAKKKKKKKKLQPEI. Over residues 1726–1735 the composition is skewed to basic and acidic residues; it reads RSEREEEERQ. The segment covering 1736 to 1745 has biased composition (basic residues); sequence KAKKKKKKKK. Residues 1794–1911 form the Bromo domain; sequence KRRKKGEVGL…DDYEDQLKEA (118 aa).

It belongs to the TAF1 family. In terms of assembly, component of the TFIID complex. TFIID is composed of TATA binding protein (TBP) and a number of TBP-associated factors (TAFs) whose MWs range from 14-217 kDa. Interacts with TAF7 and TAF14B, and (via N-terminus) with TBP1 and TBP2. Expressed in roots, leaves and inflorescences.

It localises to the nucleus. Its function is as follows. TAFs are components of the transcription factor IID (TFIID) complex that is essential for mediating regulation of RNA polymerase transcription. Core scaffold of the TFIID complex. The chain is Transcription initiation factor TFIID subunit 1 (TAF1) from Arabidopsis thaliana (Mouse-ear cress).